The sequence spans 277 residues: Large ribosomal subunit protein uL2 (277 aa).

Residues 219–277 (TVRGSVMNPNDHPHGGGEGRSPIGHPSPRTPWGKPALGYKTRKNKKYSDRFIVKRRHDK) form a disordered region.

The protein belongs to the universal ribosomal protein uL2 family. As to quaternary structure, part of the 50S ribosomal subunit. Forms a bridge to the 30S subunit in the 70S ribosome.

Its function is as follows. One of the primary rRNA binding proteins. Required for association of the 30S and 50S subunits to form the 70S ribosome, for tRNA binding and peptide bond formation. It has been suggested to have peptidyltransferase activity; this is somewhat controversial. Makes several contacts with the 16S rRNA in the 70S ribosome. The sequence is that of Large ribosomal subunit protein uL2 from Clostridium botulinum (strain ATCC 19397 / Type A).